Reading from the N-terminus, the 195-residue chain is dTTP/UTP pyrophosphatase (195 aa).

The active-site Proton acceptor is the D73.

Belongs to the Maf family. YhdE subfamily. Requires a divalent metal cation as cofactor.

The protein resides in the cytoplasm. The catalysed reaction is dTTP + H2O = dTMP + diphosphate + H(+). It carries out the reaction UTP + H2O = UMP + diphosphate + H(+). In terms of biological role, nucleoside triphosphate pyrophosphatase that hydrolyzes dTTP and UTP. May have a dual role in cell division arrest and in preventing the incorporation of modified nucleotides into cellular nucleic acids. The sequence is that of dTTP/UTP pyrophosphatase from Exiguobacterium sibiricum (strain DSM 17290 / CCUG 55495 / CIP 109462 / JCM 13490 / 255-15).